Reading from the N-terminus, the 533-residue chain is 2-isopropylmalate synthase (533 aa).

Positions 8–269 constitute a Pyruvate carboxyltransferase domain; sequence ILIFDTTLRD…YFNPFLGRPA (262 aa). Mn(2+) contacts are provided by Asp17, His208, His210, and Asn244. The tract at residues 408–533 is regulatory domain; it reads RLERVQVSCG…REHPPVVASL (126 aa).

It belongs to the alpha-IPM synthase/homocitrate synthase family. LeuA type 1 subfamily. Homodimer. It depends on Mn(2+) as a cofactor.

Its subcellular location is the cytoplasm. It carries out the reaction 3-methyl-2-oxobutanoate + acetyl-CoA + H2O = (2S)-2-isopropylmalate + CoA + H(+). It participates in amino-acid biosynthesis; L-leucine biosynthesis; L-leucine from 3-methyl-2-oxobutanoate: step 1/4. Catalyzes the condensation of the acetyl group of acetyl-CoA with 3-methyl-2-oxobutanoate (2-ketoisovalerate) to form 3-carboxy-3-hydroxy-4-methylpentanoate (2-isopropylmalate). The chain is 2-isopropylmalate synthase from Synechocystis sp. (strain ATCC 27184 / PCC 6803 / Kazusa).